The sequence spans 365 residues: Terpene cyclase 4 (365 aa).

Residues 1–11 are compositionally biased toward pro residues; sequence MVPSLITPPPS. The disordered stretch occupies residues 1–20; the sequence is MVPSLITPPPSRSGEATPQK. Asp118, Asn260, and Ser264 together coordinate Mg(2+). The D(D/E)XX(D/E) motif signature appears at 118–122; it reads DDPFD. The short motif at 260-268 is the NSE motif element; sequence NDLCSYRKD. The WxxxxxRY motif signature appears at 341 to 348; that stretch reads WSLYTFRY. Positions 347 and 348 each coordinate (2E,6E)-farnesyl diphosphate.

It belongs to the terpene synthase family. As to quaternary structure, homodimer. Mg(2+) serves as cofactor.

The catalysed reaction is (2E,6E)-farnesyl diphosphate + H2O = koraiol + diphosphate. The protein operates within sesquiterpene biosynthesis. Its function is as follows. Terpene cyclase that catalyzes the cyclization of farnesyl diphosphate (FPP) to the sesquiterpene koraiol. The protein is Terpene cyclase 4 of Gibberella fujikuroi (strain CBS 195.34 / IMI 58289 / NRRL A-6831) (Bakanae and foot rot disease fungus).